Reading from the N-terminus, the 346-residue chain is Methylthioribose-1-phosphate isomerase (346 aa).

Substrate-binding positions include 46–48 (RGA), Arg-89, and Gln-196. The Proton donor role is filled by Asp-237. 247–248 (NK) lines the substrate pocket.

The protein belongs to the eIF-2B alpha/beta/delta subunits family. MtnA subfamily.

The catalysed reaction is 5-(methylsulfanyl)-alpha-D-ribose 1-phosphate = 5-(methylsulfanyl)-D-ribulose 1-phosphate. The protein operates within amino-acid biosynthesis; L-methionine biosynthesis via salvage pathway; L-methionine from S-methyl-5-thio-alpha-D-ribose 1-phosphate: step 1/6. Catalyzes the interconversion of methylthioribose-1-phosphate (MTR-1-P) into methylthioribulose-1-phosphate (MTRu-1-P). The polypeptide is Methylthioribose-1-phosphate isomerase (Trichlorobacter lovleyi (strain ATCC BAA-1151 / DSM 17278 / SZ) (Geobacter lovleyi)).